We begin with the raw amino-acid sequence, 269 residues long: 3-methyl-2-oxobutanoate hydroxymethyltransferase (269 aa).

Positions 43 and 82 each coordinate Mg(2+). 3-methyl-2-oxobutanoate is bound by residues 43 to 44, Asp-82, and Lys-110; that span reads DS. Mg(2+) is bound at residue Glu-112. Glu-179 acts as the Proton acceptor in catalysis.

It belongs to the PanB family. Homodecamer; pentamer of dimers. Mg(2+) is required as a cofactor.

The protein localises to the cytoplasm. It carries out the reaction 3-methyl-2-oxobutanoate + (6R)-5,10-methylene-5,6,7,8-tetrahydrofolate + H2O = 2-dehydropantoate + (6S)-5,6,7,8-tetrahydrofolate. It functions in the pathway cofactor biosynthesis; (R)-pantothenate biosynthesis; (R)-pantoate from 3-methyl-2-oxobutanoate: step 1/2. In terms of biological role, catalyzes the reversible reaction in which hydroxymethyl group from 5,10-methylenetetrahydrofolate is transferred onto alpha-ketoisovalerate to form ketopantoate. This Acinetobacter baylyi (strain ATCC 33305 / BD413 / ADP1) protein is 3-methyl-2-oxobutanoate hydroxymethyltransferase.